The sequence spans 644 residues: Polyglycine hydrolase (644 aa).

A signal peptide spans 1 to 23; it reads MYTSRSLFSTLASCLSLATLVAS. Residues N100, N144, N159, N244, and N340 are each glycosylated (N-linked (GlcNAc...) asparagine). C149 and C183 are oxidised to a cystine. S369 is an active-site residue. 4 N-linked (GlcNAc...) asparagine glycosylation sites follow: N389, N410, N443, and N486.

The protein belongs to the peptidase S12 family.

The protein localises to the secreted. It catalyses the reaction a glycyl-glycyl-[protein] + H2O = N-terminal glycyl-[protein] + [protein]-C-terminal glycine. With respect to regulation, not inhibited by phenylmethylsulfonyl fluoride (PMSF; serine peptidase class S1 inhibitor), clavulanic acid (beta-lactamase inhibitor) or ampicillin (penicillin-binding protein (PBP) inhibitor). Functionally, serine-type endopeptidase that cleaves Gly-Gly bonds in the polyglycine linker of host plant class IV chitinases to disrupt their chitin-binding, and thereby plays a role in lowering the defense responses of the host to the fungus. Degrades Z.mays Endochitinase A (CHIA). Has low proteolytic activity on Z.mays Endochitinase B (CHIB). In Cochliobolus carbonum (strain 26-R-13) (Maize leaf spot fungus), this protein is Polyglycine hydrolase.